The chain runs to 22 residues: RDCCTPPKKCKDRRCKPLKCCA.

3 cysteine pairs are disulfide-bonded: C3–C15, C4–C20, and C10–C21. Residues P6, P7, and P17 each carry the 4-hydroxyproline modification. A22 is modified (alanine amide).

This sequence belongs to the conotoxin M superfamily. As to expression, expressed by the venom duct.

It is found in the secreted. In terms of biological role, mu-conotoxins block voltage-gated sodium channels (Nav). This toxin shows potent activity on Nav1.4/SCN4A (IC(50)=286 nM), and weak activity on mNav1.6/SCN8A. This is Mu-conotoxin GIIIC from Conus geographus (Geography cone).